Consider the following 210-residue polypeptide: Ribosomal RNA small subunit methyltransferase G (210 aa).

Residues glycine 76, methionine 81, 127–128, and arginine 145 contribute to the S-adenosyl-L-methionine site; that span reads VE.

This sequence belongs to the methyltransferase superfamily. RNA methyltransferase RsmG family.

The protein resides in the cytoplasm. The catalysed reaction is guanosine(527) in 16S rRNA + S-adenosyl-L-methionine = N(7)-methylguanosine(527) in 16S rRNA + S-adenosyl-L-homocysteine. Specifically methylates the N7 position of guanine in position 527 of 16S rRNA. This is Ribosomal RNA small subunit methyltransferase G from Acinetobacter baumannii (strain AB307-0294).